Consider the following 79-residue polypeptide: Acyl carrier protein 1 (79 aa).

Residues 2 to 77 (DNIEQRVKKI…QAIDYARANV (76 aa)) enclose the Carrier domain. Ser-37 bears the O-(pantetheine 4'-phosphoryl)serine mark.

The protein belongs to the acyl carrier protein (ACP) family. 4'-phosphopantetheine is transferred from CoA to a specific serine of apo-ACP by AcpS. This modification is essential for activity because fatty acids are bound in thioester linkage to the sulfhydryl of the prosthetic group.

It localises to the cytoplasm. The protein operates within lipid metabolism; fatty acid biosynthesis. In terms of biological role, carrier of the growing fatty acid chain in fatty acid biosynthesis. This Ralstonia nicotianae (strain ATCC BAA-1114 / GMI1000) (Ralstonia solanacearum) protein is Acyl carrier protein 1.